Here is a 101-residue protein sequence, read N- to C-terminus: NADH-quinone oxidoreductase subunit K (101 aa).

3 helical membrane-spanning segments follow: residues 4 to 24 (LAHYLVLGAILFAIAIVGIFL), 30 to 50 (IIILMSIELMLLAVNTNFVAF), and 61 to 81 (IFVFFVLTVAAAEAAIGLAIL).

The protein belongs to the complex I subunit 4L family. NDH-1 is composed of 14 different subunits. Subunits NuoA, H, J, K, L, M, N constitute the membrane sector of the complex.

The protein localises to the cell inner membrane. It carries out the reaction a quinone + NADH + 5 H(+)(in) = a quinol + NAD(+) + 4 H(+)(out). Functionally, NDH-1 shuttles electrons from NADH, via FMN and iron-sulfur (Fe-S) centers, to quinones in the respiratory chain. The immediate electron acceptor for the enzyme in this species is believed to be ubiquinone. Couples the redox reaction to proton translocation (for every two electrons transferred, four hydrogen ions are translocated across the cytoplasmic membrane), and thus conserves the redox energy in a proton gradient. The polypeptide is NADH-quinone oxidoreductase subunit K (Burkholderia cenocepacia (strain HI2424)).